Reading from the N-terminus, the 103-residue chain is Sec-independent protein translocase protein TatA (103 aa).

Residues Met-1 to Ala-21 traverse the membrane as a helical segment. A disordered region spans residues Val-42–Pro-103. Low complexity predominate over residues Pro-52 to Pro-90. Positions Gln-94–Pro-103 are enriched in basic and acidic residues.

Belongs to the TatA/E family. As to quaternary structure, the Tat system comprises two distinct complexes: a TatABC complex, containing multiple copies of TatA, TatB and TatC subunits, and a separate TatA complex, containing only TatA subunits. Substrates initially bind to the TatABC complex, which probably triggers association of the separate TatA complex to form the active translocon.

Its subcellular location is the cell membrane. Part of the twin-arginine translocation (Tat) system that transports large folded proteins containing a characteristic twin-arginine motif in their signal peptide across membranes. TatA could form the protein-conducting channel of the Tat system. The polypeptide is Sec-independent protein translocase protein TatA (Corynebacterium efficiens (strain DSM 44549 / YS-314 / AJ 12310 / JCM 11189 / NBRC 100395)).